Consider the following 299-residue polypeptide: Putative beta-glucosidase 2 (299 aa).

The signal sequence occupies residues M1–T16. N49–E50 is a binding site for a beta-D-glucoside. Residue E50 is the Proton donor of the active site. A disulfide bridge connects residues C69 and C72. N-linked (GlcNAc...) asparagine glycans are attached at residues N71 and N76. An a beta-D-glucoside-binding site is contributed by Y189. N-linked (GlcNAc...) asparagine glycosylation is present at N222. E255 contacts a beta-D-glucoside. The active-site Nucleophile is the E255. N290 carries an N-linked (GlcNAc...) asparagine glycan.

Belongs to the glycosyl hydrolase 1 family.

The enzyme catalyses Hydrolysis of terminal, non-reducing beta-D-glucosyl residues with release of beta-D-glucose.. The sequence is that of Putative beta-glucosidase 2 from Arabidopsis thaliana (Mouse-ear cress).